Here is a 284-residue protein sequence, read N- to C-terminus: MTDVPATFTQAECNGDKPPENGQQTITKISEELTDVDSPLPHYRVEPSLEGALTKGSQEERRKLQGNMLLNSSMEDKMLKENPEEKLFIVHKAITDLSLQETSADEMTFREGHQWEKIPLSGSNQEIRRQKERITEQPLKEEEDEDRKNKGHQAAEIEWLGFRKPSQADMLHSKHDEEQKVWDEEIDDDDDDNCNNDEDEVRVIEFKKKHEEVSQFKEEGDASEDSPLSSASSQAVTPDEQPTLGKKSDISRNAYSRYNTISYRKIRKGNTKQRIDEFESMMHL.

The interval 1 to 23 (MTDVPATFTQAECNGDKPPENGQ) is disordered. Serine 73 is subject to Phosphoserine. Positions 110–251 (REGHQWEKIP…PTLGKKSDIS (142 aa)) are disordered. Composition is skewed to basic and acidic residues over residues 126–140 (EIRRQKERITEQPLK) and 171–183 (LHSKHDEEQKVWD). Over residues 184 to 200 (EEIDDDDDDNCNNDEDE) the composition is skewed to acidic residues. Residues 201 to 220 (VRVIEFKKKHEEVSQFKEEG) are compositionally biased toward basic and acidic residues. Serine 214, serine 226, serine 230, and serine 233 each carry phosphoserine. The segment covering 225–235 (DSPLSSASSQA) has biased composition (low complexity). Threonine 237 carries the post-translational modification Phosphothreonine. The segment at 265 to 284 (KIRKGNTKQRIDEFESMMHL) is binds actin.

Binds actin. Highly expressed in adult and fetal brain. Expressed at intermediate levels in the lung and liver.

The protein resides in the cytoplasm. The protein localises to the cytoskeleton. In terms of biological role, plays a role in cytoskeletal rearrangements during the late wrapping and/or compaction phases of myelinogenesis as well as in maintenance and stability of myelin sheath in the adult. May play an important role in late-stage oligodendroglia maturation, myelin/Ranvier node formation during CNS development, and in the maintenance and plasticity of related structures in the mature CNS. The polypeptide is Ermin (ERMN) (Homo sapiens (Human)).